The sequence spans 828 residues: Periplasmic nitrate reductase (828 aa).

A signal peptide (tat-type signal) is located at residues 1 to 31; that stretch reads MKLSRRSFMKANAVAAAAAAAGLSVPGVARA. One can recognise a 4Fe-4S Mo/W bis-MGD-type domain in the interval 39–95; that stretch reads IKWDKAPCRFCGTGCGVLVGTQQGRVVACQGDPDAPVNRGLNCIKGYFLPKIMYGKD. Residues Cys-46, Cys-49, Cys-53, and Cys-81 each contribute to the [4Fe-4S] cluster site. Mo-bis(molybdopterin guanine dinucleotide) contacts are provided by residues Lys-83, Gln-150, Asn-175, Cys-179, 212 to 219, 243 to 247, 262 to 264, Met-372, Gln-376, Asn-482, 508 to 509, Lys-531, Asp-558, and 718 to 727; these read WGSNMAEM, STFQH, QSD, SD, and TGRVLEHWHT. Phe-794 lines the substrate pocket. Mo-bis(molybdopterin guanine dinucleotide)-binding residues include Asn-802 and Lys-819.

The protein belongs to the prokaryotic molybdopterin-containing oxidoreductase family. NasA/NapA/NarB subfamily. Component of the periplasmic nitrate reductase NapAB complex composed of NapA and NapB. [4Fe-4S] cluster is required as a cofactor. The cofactor is Mo-bis(molybdopterin guanine dinucleotide). In terms of processing, predicted to be exported by the Tat system. The position of the signal peptide cleavage has not been experimentally proven.

The protein resides in the periplasm. It carries out the reaction 2 Fe(II)-[cytochrome] + nitrate + 2 H(+) = 2 Fe(III)-[cytochrome] + nitrite + H2O. In terms of biological role, catalytic subunit of the periplasmic nitrate reductase complex NapAB. Receives electrons from NapB and catalyzes the reduction of nitrate to nitrite. The protein is Periplasmic nitrate reductase of Salmonella agona (strain SL483).